The sequence spans 523 residues: Probable FAD synthase (523 aa).

A molybdenum cofactor biosynthesis protein-like region spans residues 20 to 111 (AIVVIGDEIL…TDQLHFSDEI (92 aa)). The interval 332–489 (QIALSFNGGK…SLGGRDNTVK (158 aa)) is FAD synthase.

In the N-terminal section; belongs to the MoaB/Mog family. The protein in the C-terminal section; belongs to the PAPS reductase family. FAD1 subfamily. The cofactor is Mg(2+).

It catalyses the reaction FMN + ATP + H(+) = FAD + diphosphate. The protein operates within cofactor biosynthesis; FAD biosynthesis; FAD from FMN: step 1/1. Catalyzes the adenylation of flavin mononucleotide (FMN) to form flavin adenine dinucleotide (FAD) coenzyme. The protein is Probable FAD synthase of Caenorhabditis briggsae.